A 153-amino-acid polypeptide reads, in one-letter code: Large ribosomal subunit protein uL15 (153 aa).

Positions 21–40 (RGIGSGKGKTGGRGIKGQKS) are disordered. The segment covering 23–35 (IGSGKGKTGGRGI) has biased composition (gly residues).

It belongs to the universal ribosomal protein uL15 family. In terms of assembly, part of the 50S ribosomal subunit.

In terms of biological role, binds to the 23S rRNA. This is Large ribosomal subunit protein uL15 from Rickettsia canadensis (strain McKiel).